A 101-amino-acid polypeptide reads, in one-letter code: MAKKALINRNLKRQALAKKYAAKRAAIKAVINDSNATEEERFEARLRFQSIPRNAAPVRQRRRCALTGRPRGTFRKFGLGRIKIREIAMRGEIPGVVKASW.

It belongs to the universal ribosomal protein uS14 family. Part of the 30S ribosomal subunit. Contacts proteins S3 and S10.

Its function is as follows. Binds 16S rRNA, required for the assembly of 30S particles and may also be responsible for determining the conformation of the 16S rRNA at the A site. The polypeptide is Small ribosomal subunit protein uS14 (Neisseria meningitidis serogroup C / serotype 2a (strain ATCC 700532 / DSM 15464 / FAM18)).